The chain runs to 226 residues: UPF0758 protein SAK_1186 (226 aa).

The region spanning 103–225 is the MPN domain; that stretch reads QILSSEQLAR…YYSFREEADI (123 aa). Zn(2+) is bound by residues H174, H176, and D187. Residues 174-187 carry the JAMM motif motif; that stretch reads HNHPSGSPKPSESD.

The protein belongs to the UPF0758 family.

The chain is UPF0758 protein SAK_1186 from Streptococcus agalactiae serotype Ia (strain ATCC 27591 / A909 / CDC SS700).